The primary structure comprises 1790 residues: Protein FAM186A (1790 aa).

The protein belongs to the FAM186 family.

This Mus musculus (Mouse) protein is Protein FAM186A (FAM186A).